A 260-amino-acid chain; its full sequence is Hydroxyethylthiazole kinase (260 aa).

Substrate is bound at residue M38. ATP-binding residues include R114 and T159. G186 serves as a coordination point for substrate.

The protein belongs to the Thz kinase family. Requires Mg(2+) as cofactor.

The catalysed reaction is 5-(2-hydroxyethyl)-4-methylthiazole + ATP = 4-methyl-5-(2-phosphooxyethyl)-thiazole + ADP + H(+). It participates in cofactor biosynthesis; thiamine diphosphate biosynthesis; 4-methyl-5-(2-phosphoethyl)-thiazole from 5-(2-hydroxyethyl)-4-methylthiazole: step 1/1. In terms of biological role, catalyzes the phosphorylation of the hydroxyl group of 4-methyl-5-beta-hydroxyethylthiazole (THZ). This chain is Hydroxyethylthiazole kinase, found in Helicobacter pylori (strain HPAG1).